Consider the following 110-residue polypeptide: Protease inhibitor SIL-V1/SIL-V4 (110 aa).

Disulfide bonds link C31–C46 and C68–C98.

It belongs to the protease inhibitor I16 (SSI) family. Homodimer.

It is found in the secreted. This is Protease inhibitor SIL-V1/SIL-V4 from Streptomyces netropsis (Streptoverticillium netropsis).